A 249-amino-acid chain; its full sequence is Quinate/shikimate dehydrogenase (249 aa).

The substrate site is built by Lys-32 and Asp-68. NAD(+) contacts are provided by residues 93–96 (AGGA), 116–119 (NRRD), Lys-166, 193–196 (CVYN), and Gly-216.

Belongs to the shikimate dehydrogenase family. In terms of assembly, homodimer.

The catalysed reaction is L-quinate + NAD(+) = 3-dehydroquinate + NADH + H(+). It carries out the reaction L-quinate + NADP(+) = 3-dehydroquinate + NADPH + H(+). The enzyme catalyses shikimate + NADP(+) = 3-dehydroshikimate + NADPH + H(+). It catalyses the reaction shikimate + NAD(+) = 3-dehydroshikimate + NADH + H(+). Its pathway is metabolic intermediate biosynthesis; chorismate biosynthesis; chorismate from D-erythrose 4-phosphate and phosphoenolpyruvate: step 4/7. In terms of biological role, the actual biological function of YdiB remains unclear, nor is it known whether 3-dehydroshikimate or quinate represents the natural substrate. Catalyzes the reversible NAD-dependent reduction of both 3-dehydroshikimate (DHSA) and 3-dehydroquinate to yield shikimate (SA) and quinate, respectively. It can use both NAD or NADP for catalysis, however it has higher catalytic efficiency with NAD. The protein is Quinate/shikimate dehydrogenase of Shigella flexneri serotype 5b (strain 8401).